We begin with the raw amino-acid sequence, 274 residues long: 2-dehydro-3-deoxyphosphooctonate aldolase (274 aa).

This sequence belongs to the KdsA family.

It is found in the cytoplasm. It catalyses the reaction D-arabinose 5-phosphate + phosphoenolpyruvate + H2O = 3-deoxy-alpha-D-manno-2-octulosonate-8-phosphate + phosphate. Its pathway is carbohydrate biosynthesis; 3-deoxy-D-manno-octulosonate biosynthesis; 3-deoxy-D-manno-octulosonate from D-ribulose 5-phosphate: step 2/3. It functions in the pathway bacterial outer membrane biogenesis; lipopolysaccharide biosynthesis. This is 2-dehydro-3-deoxyphosphooctonate aldolase from Rickettsia felis (strain ATCC VR-1525 / URRWXCal2) (Rickettsia azadi).